The primary structure comprises 343 residues: Flap endonuclease 1 (343 aa).

An N-domain region spans residues 1-98 (MGVPIGELIP…KELEKRREAR (98 aa)). Mg(2+)-binding residues include aspartate 27, aspartate 80, glutamate 152, glutamate 154, aspartate 173, aspartate 175, and aspartate 236. The interval 116-258 (EARKYAQRAT…KALEIVKYSK (143 aa)) is I-domain. Residues 330–338 (KQSTLESWF) are interaction with PCNA.

The protein belongs to the XPG/RAD2 endonuclease family. FEN1 subfamily. In terms of assembly, interacts with PCNA. PCNA stimulates the nuclease activity without altering cleavage specificity. Requires Mg(2+) as cofactor.

In terms of biological role, structure-specific nuclease with 5'-flap endonuclease and 5'-3' exonuclease activities involved in DNA replication and repair. During DNA replication, cleaves the 5'-overhanging flap structure that is generated by displacement synthesis when DNA polymerase encounters the 5'-end of a downstream Okazaki fragment. Binds the unpaired 3'-DNA end and kinks the DNA to facilitate 5' cleavage specificity. Cleaves one nucleotide into the double-stranded DNA from the junction in flap DNA, leaving a nick for ligation. Also involved in the base excision repair (BER) pathway. Acts as a genome stabilization factor that prevents flaps from equilibrating into structures that lead to duplications and deletions. Also possesses 5'-3' exonuclease activity on nicked or gapped double-stranded DNA. This is Flap endonuclease 1 from Pyrococcus abyssi (strain GE5 / Orsay).